A 485-amino-acid chain; its full sequence is Ribulose bisphosphate carboxylase large chain (485 aa).

The substrate site is built by Asn-124 and Thr-174. The active-site Proton acceptor is the Lys-176. Position 178 (Lys-178) interacts with substrate. Positions 202, 204, and 205 each coordinate Mg(2+). An N6-carboxylysine modification is found at Lys-202. His-294 serves as the catalytic Proton acceptor. The substrate site is built by Arg-295, His-327, and Ser-379.

It belongs to the RuBisCO large chain family. Type I subfamily. In terms of assembly, heterohexadecamer of 8 large chains and 8 small chains. The cofactor is Mg(2+).

It carries out the reaction 2 (2R)-3-phosphoglycerate + 2 H(+) = D-ribulose 1,5-bisphosphate + CO2 + H2O. The enzyme catalyses D-ribulose 1,5-bisphosphate + O2 = 2-phosphoglycolate + (2R)-3-phosphoglycerate + 2 H(+). In terms of biological role, ruBisCO catalyzes two reactions: the carboxylation of D-ribulose 1,5-bisphosphate, the primary event in carbon dioxide fixation, as well as the oxidative fragmentation of the pentose substrate in the photorespiration process. Both reactions occur simultaneously and in competition at the same active site. The sequence is that of Ribulose bisphosphate carboxylase large chain from Rhodopseudomonas palustris (strain BisB18).